A 427-amino-acid chain; its full sequence is MFVDIAKIYVKAGDGGDGIVAFRREKYVPAGGPAGGDGGKGGDVIFVADRELNTLLDFKYKRHYKAQNGERGGPNNMHGKDGEDLIIKVPVGTVIKDAETGEIIADLSREGDRAIVAHGGRGGRGNSHFATSTRQVPRFAEVGEKGDELWVILELKVLADVGLIGYPNVGKSTFLSVATNARPEIANYPFTTKYPNLGIVYISEGESFVLADIPGLIEGASEGAGLGHQFLRHVERTKVLIHIVDVSGSEGREPVEDFIKINEELKKYSPELAQKPQIVAANKMDLPDAQAYFELFKEEIEKMGYEVYPVSAATGMGVREVLKRAYELLKQQKAAENVEEDAKPRTFVYYKKKDVKPLTIRKENGVYVVEGTVVEKVARNIVLNDHDSFRYFQNFLNKLGVFDKLREMGIQDGDIVRILDVEFEYYE.

The Obg domain maps to 1-158; sequence MFVDIAKIYV…LWVILELKVL (158 aa). In terms of domain architecture, OBG-type G spans 159-330; that stretch reads ADVGLIGYPN…VLKRAYELLK (172 aa). GTP contacts are provided by residues 165 to 172, 190 to 194, 212 to 215, 282 to 285, and 311 to 313; these read GYPNVGKS, FTTKY, DIPG, NKMD, and SAA. Residues Ser172 and Thr192 each coordinate Mg(2+). One can recognise an OCT domain in the interval 347-427; it reads FVYYKKKDVK…ILDVEFEYYE (81 aa).

It belongs to the TRAFAC class OBG-HflX-like GTPase superfamily. OBG GTPase family. Monomer. Mg(2+) serves as cofactor.

It localises to the cytoplasm. Its function is as follows. An essential GTPase which binds GTP, GDP and possibly (p)ppGpp with moderate affinity, with high nucleotide exchange rates and a fairly low GTP hydrolysis rate. Plays a role in control of the cell cycle, stress response, ribosome biogenesis and in those bacteria that undergo differentiation, in morphogenesis control. The chain is GTPase Obg from Caldicellulosiruptor bescii (strain ATCC BAA-1888 / DSM 6725 / KCTC 15123 / Z-1320) (Anaerocellum thermophilum).